The primary structure comprises 205 residues: Holliday junction branch migration complex subunit RuvA (205 aa).

Residues 1–64 (MIGKLKGVVD…EDMIRLYGFR (64 aa)) are domain I. The interval 65–143 (SDAEREWFRL…AFAPVDPALV (79 aa)) is domain II. The segment at 144–152 (RLAGAVEAR) is flexible linker. A domain III region spans residues 153 to 205 (TAPQPVADAISALVNLGYPQAQASAAVAAALQSAGAEAEAKTLIRLGLRELAR).

It belongs to the RuvA family. As to quaternary structure, homotetramer. Forms an RuvA(8)-RuvB(12)-Holliday junction (HJ) complex. HJ DNA is sandwiched between 2 RuvA tetramers; dsDNA enters through RuvA and exits via RuvB. An RuvB hexamer assembles on each DNA strand where it exits the tetramer. Each RuvB hexamer is contacted by two RuvA subunits (via domain III) on 2 adjacent RuvB subunits; this complex drives branch migration. In the full resolvosome a probable DNA-RuvA(4)-RuvB(12)-RuvC(2) complex forms which resolves the HJ.

The protein localises to the cytoplasm. Functionally, the RuvA-RuvB-RuvC complex processes Holliday junction (HJ) DNA during genetic recombination and DNA repair, while the RuvA-RuvB complex plays an important role in the rescue of blocked DNA replication forks via replication fork reversal (RFR). RuvA specifically binds to HJ cruciform DNA, conferring on it an open structure. The RuvB hexamer acts as an ATP-dependent pump, pulling dsDNA into and through the RuvAB complex. HJ branch migration allows RuvC to scan DNA until it finds its consensus sequence, where it cleaves and resolves the cruciform DNA. In Methylobacterium sp. (strain 4-46), this protein is Holliday junction branch migration complex subunit RuvA.